Here is a 409-residue protein sequence, read N- to C-terminus: DEP domain-containing mTOR-interacting protein (409 aa).

M1 is subject to N-acetylmethionine. Positions 1–25 (MEEGGSTGSAGSDSSTSGSGGAQQR) are disordered. 2 DEP domains span residues 36-119 (TGEQ…RFRK) and 145-219 (SPEN…QFRM). The DDEX motif motif lies at 217–235 (FRMNFRRRRRLMELLNEKS). S235 is subject to Phosphoserine; by MAPK3. The residue at position 241 (T241) is a Phosphothreonine. S244 and S258 each carry phosphoserine. At T259 the chain carries Phosphothreonine. 5 positions are modified to phosphoserine: S263, S265, S280, S282, and S283. Residues S286 and S287 each carry the phosphoserine; by CK1 modification. Positions 286–291 (SSGYFS) match the BetaTrCP degron motif motif. Phosphotyrosine; by SYK is present on Y289. S291 carries the post-translational modification Phosphoserine; by CK1. The residue at position 293 (S293) is a Phosphoserine; by MTOR. T295 bears the Phosphothreonine; by MTOR mark. S297 and S298 each carry phosphoserine. Position 299 is a phosphoserine; by MTOR (S299). The 78-residue stretch at 330 to 407 (TFTIVGDAVG…TIVMEVMEEL (78 aa)) folds into the PDZ domain.

As to quaternary structure, associated component of the mechanistic target of rapamycin complex 1 (mTORC1) which contains MTOR, MLST8 and RPTOR. Associated component of the mechanistic target of rapamycin complex 2 (mTORC2) which contains MTOR, MLST8, PROTOR1, RICTOR, MAPKAP1 and DEPTOR. Interacts (via PDZ domain) with MTOR; interacts with MTOR within both mTORC1 and mTORC2. Interacts (via PDZ domain) with MINAR1 (via N-terminus). Interacts with SIK3. Post-translationally, phosphorylation weakens interaction with MTOR within mTORC1 and mTORC2. Phosphorylated at Ser-286, Ser-287 and Ser-291 in response to mitogenic stimulation by MTOR: DEPTOR is either directly phosphorylated by MTOR or indirectly via proteins kinases that are activated by MTOR, such as CK1/CSNK1A1. Phosphorylation at Ser-286, Ser-287 and Ser-291 promotes ubiquitination by the SCF(BTRC) complex, followed by degradation. Phosphorylation at Ser-235 by MAPK3/ERK1 promotes deubiquitination by USP7, enhancing its stability. Phosphorylation at Tyr-289 by SYK impairs its interaction with MTOR, promoting mTORC1 and mTORC2 signaling. In terms of processing, ubiquitinated; leading to proteasomal degradation. Ubiquitination by the SCF(BTRC) and SCF(FBXW11) complexes following phosphorylation at Ser-286, Ser-287 and Ser-291 by MTOR, leads to its degradation by the proteasome. Deubiquitinated by OTUB1 in response to amino acid via a non-canonical mechanism, leading to DEPTOR stability. Deubiquitinated by USP7 following phosphorylation at Ser-235, promoting its stability.

It is found in the lysosome membrane. With respect to regulation, inhibited upon phosphatidic acid-binding: phosphatidic acid produced upon mitogenic stimulation promotes DEPTOR dissociatiom from the mTORC1 and mTORC2 complexes, leading to their activation. Specifically binds unsaturated phosphatidic acid, such as 16:0-18:1, 18:0-18:1 and di-18:1. Inhibited when nutrients are present via a feedback loop: phosphorylation by MTOR promotes DEPTOR ubiquitination and degradation. Its function is as follows. Negative regulator of the mTORC1 and mTORC2 complexes: inhibits the protein kinase activity of MTOR, thereby inactivating both complexes. DEPTOR inhibits mTORC1 and mTORC2 to induce autophagy. In contrast to AKT1S1/PRAS40, only partially inhibits mTORC1 activity. This is DEP domain-containing mTOR-interacting protein from Homo sapiens (Human).